Here is a 66-residue protein sequence, read N- to C-terminus: Large ribosomal subunit protein bL31 (66 aa).

The Zn(2+) site is built by C16, C18, C36, and C39.

The protein belongs to the bacterial ribosomal protein bL31 family. Type A subfamily. As to quaternary structure, part of the 50S ribosomal subunit. Zn(2+) is required as a cofactor.

In terms of biological role, binds the 23S rRNA. The polypeptide is Large ribosomal subunit protein bL31 (Geobacter metallireducens (strain ATCC 53774 / DSM 7210 / GS-15)).